We begin with the raw amino-acid sequence, 33 residues long: uncharacterized protein (33 aa).

It localises to the cytoplasm. Its subcellular location is the nucleus. This is an uncharacterized protein from Schizosaccharomyces pombe (strain 972 / ATCC 24843) (Fission yeast).